We begin with the raw amino-acid sequence, 271 residues long: Probable short-chain type dehydrogenase/reductase VdlC (271 aa).

Residue 1–25 coordinates NAD(+); it reads MAVITGASSGIGLECVLMLLNQGYK. Serine 129 contributes to the substrate binding site. Tyrosine 142 (proton acceptor) is an active-site residue.

It belongs to the short-chain dehydrogenases/reductases (SDR) family.

This is Probable short-chain type dehydrogenase/reductase VdlC (vdlC) from Helicobacter pylori (strain J99 / ATCC 700824) (Campylobacter pylori J99).